The chain runs to 82 residues: MLHPSYNDLMQVVNSEVEPGEQPVVNSRYSIVLATAKRARQIIDGAEPLTESSCNKPLSIAVEELYKSKVKIVSEDDENENE.

This sequence belongs to the RNA polymerase subunit omega family. The RNAP catalytic core consists of 2 alpha, 1 beta, 1 beta' and 1 omega subunit. When a sigma factor is associated with the core the holoenzyme is formed, which can initiate transcription.

The catalysed reaction is RNA(n) + a ribonucleoside 5'-triphosphate = RNA(n+1) + diphosphate. Its function is as follows. Promotes RNA polymerase assembly. Latches the N- and C-terminal regions of the beta' subunit thereby facilitating its interaction with the beta and alpha subunits. The chain is DNA-directed RNA polymerase subunit omega from Lachnoclostridium phytofermentans (strain ATCC 700394 / DSM 18823 / ISDg) (Clostridium phytofermentans).